A 311-amino-acid polypeptide reads, in one-letter code: R2-like ligand binding oxidase (311 aa).

Mn(2+)-binding residues include glutamate 68, glutamate 101, and histidine 104. Residues 71–162 (VTQDIQPFMA…AAQVRASVTY (92 aa)) constitute a cross-link (3-(O4'-tyrosyl)-valine (Val-Tyr)). Glutamate 101 is a binding site for Fe cation. The Fe cation site is built by glutamate 167, glutamate 202, and histidine 205.

This sequence belongs to the ribonucleoside diphosphate reductase small chain family. R2-like ligand binding oxidase subfamily. As to quaternary structure, homodimer. It depends on Fe cation as a cofactor. Mn(2+) is required as a cofactor.

Functionally, probable oxidase that might be involved in lipid metabolism. This is R2-like ligand binding oxidase from Mycolicibacterium paratuberculosis (strain ATCC BAA-968 / K-10) (Mycobacterium paratuberculosis).